The following is a 595-amino-acid chain: DNA ligase (595 aa).

NAD(+)-binding positions include 32–36, 81–82, and Glu113; these read DEKYD and SL. The active-site N6-AMP-lysine intermediate is Lys115. NAD(+) is bound by residues Arg136, Glu178, Lys296, and Lys320. Residues Cys414, Cys417, Cys432, and Cys438 each contribute to the Zn(2+) site.

It belongs to the NAD-dependent DNA ligase family. LigA subfamily. Requires Mg(2+) as cofactor. It depends on Mn(2+) as a cofactor.

The catalysed reaction is NAD(+) + (deoxyribonucleotide)n-3'-hydroxyl + 5'-phospho-(deoxyribonucleotide)m = (deoxyribonucleotide)n+m + AMP + beta-nicotinamide D-nucleotide.. DNA ligase that catalyzes the formation of phosphodiester linkages between 5'-phosphoryl and 3'-hydroxyl groups in double-stranded DNA using NAD as a coenzyme and as the energy source for the reaction. It is essential for DNA replication and repair of damaged DNA. The protein is DNA ligase of Blochmanniella pennsylvanica (strain BPEN).